The sequence spans 75 residues: Small ribosomal subunit protein eS17 (75 aa).

It belongs to the eukaryotic ribosomal protein eS17 family.

In Thermoplasma volcanium (strain ATCC 51530 / DSM 4299 / JCM 9571 / NBRC 15438 / GSS1), this protein is Small ribosomal subunit protein eS17.